The sequence spans 224 residues: MQIRYLGHSAFEITDGKWNLLIDPFITGNPACPVKAEELHPQYILVTHLHDDHVGDTVAIAKRTGATVITSFEGGQALAAQGVKVADMALGGKRRFDFGLVRVTLAFHGFGPTGGHACGFVIHIGGKRIYHAGDTALFSDMKLLNGVIEEPGIDVAMLPIGDNYTMGPEDAAVAVEWIRPKVVIPMHWGTFPVLVQDASGFAARVRETGASQPVVLRPGETYTL.

It belongs to the UPF0173 family.

This chain is UPF0173 metal-dependent hydrolase STH3160, found in Symbiobacterium thermophilum (strain DSM 24528 / JCM 14929 / IAM 14863 / T).